Consider the following 437-residue polypeptide: Mitochondrial distribution and morphology protein 12 (437 aa).

Residues 1 to 437 form the SMP-LTD domain; sequence MSIDINWRTA…VYPSFWTFLI (437 aa). Acidic residues predominate over residues 73 to 85; that stretch reads DDDADTSDVSEDL. Disordered stretches follow at residues 73–101, 187–274, and 354–384; these read DDDADTSDVSEDLLSEHSSQWDRTHSELN, SDSG…PPRM, and SEQQQESGGDDHRPRSGADSSAHTSQKRQGG. A compositionally biased stretch (basic and acidic residues) spans 91-101; it reads SQWDRTHSELN. Composition is skewed to polar residues over residues 215-240 and 371-381; these read DTSNSTSRPSTANTLPSHLSESNNLN and ADSSAHTSQKR.

Belongs to the MDM12 family. Component of the ER-mitochondria encounter structure (ERMES) or MDM complex, composed of mmm1, mdm10, mdm12 and mdm34. A mmm1 homodimer associates with one molecule of mdm12 on each side in a pairwise head-to-tail manner, and the SMP-LTD domains of mmm1 and mdm12 generate a continuous hydrophobic tunnel for phospholipid trafficking.

It localises to the mitochondrion outer membrane. The protein resides in the endoplasmic reticulum membrane. In terms of biological role, component of the ERMES/MDM complex, which serves as a molecular tether to connect the endoplasmic reticulum (ER) and mitochondria. Components of this complex are involved in the control of mitochondrial shape and protein biogenesis, and function in nonvesicular lipid trafficking between the ER and mitochondria. Mdm12 is required for the interaction of the ER-resident membrane protein mmm1 and the outer mitochondrial membrane-resident beta-barrel protein mdm10. The mdm12-mmm1 subcomplex functions in the major beta-barrel assembly pathway that is responsible for biogenesis of all mitochondrial outer membrane beta-barrel proteins, and acts in a late step after the SAM complex. The mdm10-mdm12-mmm1 subcomplex further acts in the TOM40-specific pathway after the action of the mdm12-mmm1 complex. Essential for establishing and maintaining the structure of mitochondria and maintenance of mtDNA nucleoids. The sequence is that of Mitochondrial distribution and morphology protein 12 from Aspergillus clavatus (strain ATCC 1007 / CBS 513.65 / DSM 816 / NCTC 3887 / NRRL 1 / QM 1276 / 107).